A 28-amino-acid polypeptide reads, in one-letter code: Fibrinogen alpha chain (28 aa).

Phosphoserine is present on Ser-3.

Heterohexamer; disulfide linked. Contains 2 sets of 3 non-identical chains (alpha, beta and gamma). The 2 heterotrimers are in head to head conformation with the N-termini in a small central domain. Post-translationally, conversion of fibrinogen to fibrin is triggered by thrombin, which cleaves fibrinopeptides A and B from alpha and beta chains, and thus exposes the N-terminal polymerization sites responsible for the formation of the soft clot. The soft clot is converted into the hard clot by factor XIIIA which catalyzes the epsilon-(gamma-glutamyl)lysine cross-linking between gamma chains (stronger) and between alpha chains (weaker) of different monomers. Forms F13A-mediated cross-links between a glutamine and the epsilon-amino group of a lysine residue, forming fibronectin-fibrinogen heteropolymers.

It is found in the secreted. Functionally, cleaved by the protease thrombin to yield monomers which, together with fibrinogen beta (FGB) and fibrinogen gamma (FGG), polymerize to form an insoluble fibrin matrix. Fibrin has a major function in hemostasis as one of the primary components of blood clots. In addition, functions during the early stages of wound repair to stabilize the lesion and guide cell migration during re-epithelialization. Was originally thought to be essential for platelet aggregation, based on in vitro studies using anticoagulated blood. However, subsequent studies have shown that it is not absolutely required for thrombus formation in vivo. Enhances expression of SELP in activated platelets via an ITGB3-dependent pathway. Maternal fibrinogen is essential for successful pregnancy. Fibrin deposition is also associated with infection, where it protects against IFNG-mediated hemorrhage. May also facilitate the immune response via both innate and T-cell mediated pathways. The sequence is that of Fibrinogen alpha chain (FGA) from Canis lupus familiaris (Dog).